The primary structure comprises 98 residues: Putative pterin-4-alpha-carbinolamine dehydratase (98 aa).

This sequence belongs to the pterin-4-alpha-carbinolamine dehydratase family.

It catalyses the reaction (4aS,6R)-4a-hydroxy-L-erythro-5,6,7,8-tetrahydrobiopterin = (6R)-L-erythro-6,7-dihydrobiopterin + H2O. The protein is Putative pterin-4-alpha-carbinolamine dehydratase of Jannaschia sp. (strain CCS1).